The following is a 104-amino-acid chain: Small ribosomal subunit protein uS10 (104 aa).

The protein belongs to the universal ribosomal protein uS10 family. In terms of assembly, part of the 30S ribosomal subunit.

Its function is as follows. Involved in the binding of tRNA to the ribosomes. In Variovorax paradoxus (strain S110), this protein is Small ribosomal subunit protein uS10.